We begin with the raw amino-acid sequence, 578 residues long: Solute carrier family 15 member 3 (578 aa).

Positions 1 to 15 (MSAPRAEEQPSRSGE) are enriched in basic and acidic residues. A disordered region spans residues 1-27 (MSAPRAEEQPSRSGERQPLVARGPRGP). Transmembrane regions (helical) follow at residues 33–53 (TAAA…FGVT), 77–97 (LLFL…ADVY), 102–122 (LTIS…LTTI), 155–175 (PYCA…ASSV), and 201–221 (WFYW…AFIE). Asparagine 223 is a glycosylation site (N-linked (GlcNAc...) asparagine). The chain crosses the membrane as a helical span at residues 232–252 (IIVGLVGLAFFIFLFATPVFI). Residues 280 to 301 (SRDSESAHLLPDQRSNQPGPSP) are disordered. A helical transmembrane segment spans residues 308-328 (FQVLVKILPVMVTLVPYWMVY). N-linked (GlcNAc...) asparagine glycosylation is present at asparagine 353. 2 helical membrane passes run 367 to 387 (IPEA…IPVK) and 405 to 425 (LQKM…AGVL). A glycan (N-linked (GlcNAc...) asparagine) is linked at asparagine 436. 3 consecutive transmembrane segments (helical) span residues 462-481 (YLLI…EFAY), 494-514 (GIFF…VALL), and 538-558 (YFFL…WIAG).

This sequence belongs to the major facilitator superfamily. Proton-dependent oligopeptide transporter (POT/PTR) (TC 2.A.17) family. As to expression, expressed highly in bone marrow derived macrophages, and weakly in spleen and lung. Expressed in plasmacytoid dendritic cells (pDCs) in response to toll-like receptors (TLR) stimulation.

Its subcellular location is the lysosome membrane. The protein localises to the endosome membrane. The enzyme catalyses N-acetyl-D-muramoyl-L-alanyl-D-isoglutamine(out) + n H(+)(out) = N-acetyl-D-muramoyl-L-alanyl-D-isoglutamine(in) + n H(+)(in). It catalyses the reaction glycylglycylglycine(out) + n H(+)(out) = glycylglycylglycine(in) + n H(+)(in). It carries out the reaction carnosine(out) + n H(+)(out) = carnosine(in) + n H(+)(in). The catalysed reaction is L-histidine(out) + n H(+)(out) = L-histidine(in) + n H(+)(in). Functionally, proton-coupled amino-acid transporter that transports free histidine and certain di- and tripeptides, and is involved in innate immune response. Also able to transport carnosine. Involved in the detection of microbial pathogens by toll-like receptors (TLRs) and NOD-like receptors (NLRs), probably by mediating transport of bacterial peptidoglycans across the endolysosomal membrane: catalyzes the transport of certain bacterial peptidoglycans, such as muramyl dipeptide (MDP), the NOD2 ligand. The sequence is that of Solute carrier family 15 member 3 from Mus musculus (Mouse).